The following is a 562-amino-acid chain: Sesquiterpene synthase (562 aa).

Residues aspartate 315, aspartate 319, and glutamate 467 each contribute to the Mg(2+) site. The DDXXD motif signature appears at 315 to 319 (DDIYD).

This sequence belongs to the terpene synthase family. Tpsa subfamily. It depends on Mg(2+) as a cofactor. Mn(2+) serves as cofactor.

Functionally, catalyzes the formation of beta-elemol, guaiol and bulnesol. The protein is Sesquiterpene synthase of Santalum spicatum (Australian sandalwood).